Reading from the N-terminus, the 216-residue chain is MNIILLGPPGAGKGTQAKLISEKYSIPHISTGDIFRKNISNKTPLGMEAKSYMDKGQLVPDELTIEIVKDRLGEEDCKNGFLLDGFPRTVKQAEALDEFLQNKSSKTDAALLIDVPQELILERMTGRRVCGECGASYHIKFITPKTEGVCDLCGGKLVQRKDDTKETVLERLEVYSKQTQPLIEYYKNKNVLLALDGTKEKNEVFENISNVLGAIN.

Residue 10 to 15 participates in ATP binding; sequence GAGKGT. The tract at residues 30–59 is NMP; the sequence is STGDIFRKNISNKTPLGMEAKSYMDKGQLV. Residues threonine 31, arginine 36, 57 to 59, 85 to 88, and glutamine 92 contribute to the AMP site; these read QLV and GFPR. The LID stretch occupies residues 126-163; that stretch reads GRRVCGECGASYHIKFITPKTEGVCDLCGGKLVQRKDD. ATP is bound at residue arginine 127. Zn(2+) contacts are provided by cysteine 130 and cysteine 133. Residue 136 to 137 coordinates ATP; that stretch reads SY. Cysteine 150 and cysteine 153 together coordinate Zn(2+). The AMP site is built by arginine 160 and arginine 171. Lysine 199 contributes to the ATP binding site.

The protein belongs to the adenylate kinase family. In terms of assembly, monomer.

The protein resides in the cytoplasm. The catalysed reaction is AMP + ATP = 2 ADP. Its pathway is purine metabolism; AMP biosynthesis via salvage pathway; AMP from ADP: step 1/1. Functionally, catalyzes the reversible transfer of the terminal phosphate group between ATP and AMP. Plays an important role in cellular energy homeostasis and in adenine nucleotide metabolism. This chain is Adenylate kinase, found in Clostridium tetani (strain Massachusetts / E88).